The following is a 358-amino-acid chain: Gap junction alpha-5 protein (358 aa).

Residues 1 to 19 lie on the Cytoplasmic side of the membrane; sequence MGDWSFLGEFLEEVHKHST. Residues 20–40 traverse the membrane as a helical segment; the sequence is VIGKVWLTVLFIFRMLVLGTA. The Extracellular segment spans residues 41–76; the sequence is AESSWGDEQADFRCDTIQPGCQNVCYDQAFPISHIR. Residues 77 to 97 form a helical membrane-spanning segment; that stretch reads YWVLQIIFVSTPSLVYMGHAM. Residues 98-164 are Cytoplasmic-facing; sequence HTVRMQEKQK…CTILIRTTME (67 aa). A helical membrane pass occupies residues 165–185; the sequence is VAFIVGQYLLYGIFLDTLHVC. Residues 186 to 205 are Extracellular-facing; the sequence is RRSPCPHPVNCYVSRPTEKN. The helical transmembrane segment at 206–226 threads the bilayer; the sequence is VFIVFMMAVAGLSLFLSLAEL. At 227-358 the chain is on the cytoplasmic side; it reads YHLGWKKIRQ…SKARSDDLSV (132 aa). 2 disordered regions span residues 242-262 and 318-358; these read RQGV…QSLT and SQKP…DLSV. Phosphoserine occurs at positions 353 and 357.

It belongs to the connexin family. Alpha-type (group II) subfamily. A connexon is composed of a hexamer of connexins. Abundantly expressed in the lung, also expressed in the kidney and heart.

The protein resides in the cell membrane. It is found in the cell junction. The protein localises to the gap junction. In terms of biological role, one gap junction consists of a cluster of closely packed pairs of transmembrane channels, the connexons, through which materials of low MW diffuse from one cell to a neighboring cell. This chain is Gap junction alpha-5 protein (Gja5), found in Mus musculus (Mouse).